The primary structure comprises 245 residues: MAGLELLSDQGYRVDGRRAGELRKIQARMGVFAQADGSAYIEQGNTKALAVVYGPHEIRGSRARALPDRALVNCQYSSATFSTGERKRRPHGDRKSCEMGLQLRQTFEAAILTQLHPRSQIDIYVQVLQADGGTYAACVNAATLAVLDAGIPMRDFVCACSAGFVDGTALADLSHVEEAAGGPQLALALLPASGQIALLEMDARLHEDHLEQVLEAAARASRDVHTVLDRVVRQHVQEASVLLGD.

A2 is modified (N-acetylalanine).

This sequence belongs to the RNase PH family. Component of the RNA exosome core complex (Exo-9), composed of EXOSC1, EXOSC2, EXOSC3, EXOSC4, EXOSC5, EXOSC6, EXOSC7, EXOSC8 and EXOSC9; within the complex interacts with EXOSC2, EXOSC7 and EXOSC9. The catalytically inactive RNA exosome core complex (Exo-9) associates with the catalytic subunit EXOSC10/RRP6. Exo-9 may associate with DIS3 to form the nucleolar exosome complex, or DIS3L to form the cytoplasmic exosome complex. Exo-9 is formed by a hexameric base ring consisting of the heterodimers EXOSC4-EXOSC9, EXOSC5-EXOSC8 and EXOSC6-EXOSC7, and a cap ring consisting of EXOSC1, EXOSC2 and EXOSC3. The RNA exosome complex associates with cofactors C1D/RRP47, MPHOSPH6/MPP6 and MTREX/MTR4. Interacts with DDX60. Interacts with DIS3; the interaction is direct.

It localises to the cytoplasm. The protein resides in the nucleus. Its subcellular location is the nucleolus. The protein localises to the nucleoplasm. In terms of biological role, non-catalytic component of the RNA exosome complex which has 3'-&gt;5' exoribonuclease activity and participates in a multitude of cellular RNA processing and degradation events. In the nucleus, the RNA exosome complex is involved in proper maturation of stable RNA species such as rRNA, snRNA and snoRNA, in the elimination of RNA processing by-products and non-coding 'pervasive' transcripts, such as antisense RNA species and promoter-upstream transcripts (PROMPTs), and of mRNAs with processing defects, thereby limiting or excluding their export to the cytoplasm. The RNA exosome may be involved in Ig class switch recombination (CSR) and/or Ig variable region somatic hypermutation (SHM) by targeting AICDA deamination activity to transcribed dsDNA substrates. In the cytoplasm, the RNA exosome complex is involved in general mRNA turnover and specifically degrades inherently unstable mRNAs containing AU-rich elements (AREs) within their 3' untranslated regions, and in RNA surveillance pathways, preventing translation of aberrant mRNAs. It seems to be involved in degradation of histone mRNA. The catalytic inactive RNA exosome core complex of 9 subunits (Exo-9) is proposed to play a pivotal role in the binding and presentation of RNA for ribonucleolysis, and to serve as a scaffold for the association with catalytic subunits and accessory proteins or complexes. EXOSC4 binds to ARE-containing RNAs. This is Exosome complex component RRP41 (EXOSC4) from Bos taurus (Bovine).